A 211-amino-acid chain; its full sequence is Large ribosomal subunit protein uL4 (211 aa).

Positions 44–90 (ERQGTHSTLTKGEVRGGGKKPWRQKHTGKARTGSTRNPHWTGGGVVF) are disordered. A compositionally biased stretch (basic residues) spans 60–72 (GGKKPWRQKHTGK).

The protein belongs to the universal ribosomal protein uL4 family. Part of the 50S ribosomal subunit.

Its function is as follows. One of the primary rRNA binding proteins, this protein initially binds near the 5'-end of the 23S rRNA. It is important during the early stages of 50S assembly. It makes multiple contacts with different domains of the 23S rRNA in the assembled 50S subunit and ribosome. In terms of biological role, forms part of the polypeptide exit tunnel. This is Large ribosomal subunit protein uL4 from Ureaplasma urealyticum serovar 10 (strain ATCC 33699 / Western).